A 194-amino-acid polypeptide reads, in one-letter code: Granulocyte colony-stimulating factor (194 aa).

A signal peptide spans 1–20 (KLMALQLLLWHSALWMVQEA). 2 disulfide bridges follow: cysteine 56–cysteine 62 and cysteine 84–cysteine 94. O-linked (GalNAc...) threonine glycosylation occurs at threonine 153.

Belongs to the IL-6 superfamily. As to quaternary structure, monomer. In terms of processing, O-glycosylated.

It localises to the secreted. Its function is as follows. Granulocyte/macrophage colony-stimulating factors are cytokines that act in hematopoiesis by controlling the production, differentiation, and function of 2 related white cell populations of the blood, the granulocytes and the monocytes-macrophages. This CSF induces granulocytes. This is Granulocyte colony-stimulating factor (CSF3) from Felis catus (Cat).